A 482-amino-acid chain; its full sequence is Zinc finger protein 385B (482 aa).

The tract at residues 1–105 (MNMATFLRGF…TGSACHTTTL (105 aa)) is required for induction of apoptosis. 2 consecutive Matrin-type zinc fingers follow at residues 34–64 (SFCE…RVKQ) and 169–199 (ISCN…KVKA). Disordered stretches follow at residues 54 to 75 (DGKS…PPVQ), 189 to 259 (KGSK…SFLL), and 268 to 287 (LGAI…SVAE). The interval 106–482 (PALVRTPTLM…TPASILFAPY (377 aa)) is interaction with p53/TP53. A compositionally biased stretch (basic and acidic residues) spans 231–240 (SSDKSEDKGK). The Matrin-type 3 zinc-finger motif lies at 294 to 328 (KKLLYCSLCKVAVNSLSQLEAHNTGSKHKTMVEAR). Disordered stretches follow at residues 331-352 (AGPI…GSKG) and 378-397 (HISS…KPKY). A Matrin-type 4 zinc finger spans residues 360–390 (FHCEICDVHVNSEIQLKQHISSRRHKDRVAG).

In terms of assembly, interacts with p53/TP53; the interaction is direct.

It localises to the nucleus. In terms of biological role, may play a role in p53/TP53-mediated apoptosis. The protein is Zinc finger protein 385B (Znf385b) of Mus musculus (Mouse).